The primary structure comprises 631 residues: Origin recognition complex subunit 1 (631 aa).

Low complexity-rich tracts occupy residues 1-14 (MTDE…YPPI) and 22-37 (KLNN…NNNH). The interval 1 to 164 (MTDESSSSIS…EEEDEEGKFN (164 aa)) is disordered. Positions 55–80 (DNEKIGFSDPENEKINKHKASFKDSN) are enriched in basic and acidic residues. Residues 91–104 (EDTDDDDYEDEDED) show a composition bias toward acidic residues. Basic and acidic residues predominate over residues 105–133 (ENHKIKDESDNSEDFNNHTKNTTDLDEGF). The segment covering 141–160 (ESEEEEEEEEYEEEEEEDEE) has biased composition (acidic residues). ATP-binding positions include valine 230 and 265 to 273 (GMPGTGKTA). Residues aspartate 361 and glutamate 362 each coordinate Mg(2+). Positions 362, 395, and 460 each coordinate ATP.

It belongs to the ORC1 family. In terms of assembly, ORC is composed of six subunits.

It is found in the nucleus. Component of the origin recognition complex (ORC) that binds origins of replication. DNA-binding is ATP-dependent, however specific DNA sequences that define origins of replication have not been identified so far. ORC is required to assemble the pre-replication complex necessary to initiate DNA replication. In Dictyostelium discoideum (Social amoeba), this protein is Origin recognition complex subunit 1 (orcA).